A 271-amino-acid polypeptide reads, in one-letter code: PH domain-containing protein ECU06_0670 (271 aa).

Residues 26 to 145 (AKKTLDSSES…EKKNDAFIPP (120 aa)) form a disordered region. Composition is skewed to basic and acidic residues over residues 42-64 (EVGE…EPAM), 92-120 (QPEK…LLDK), and 128-140 (EENA…KKND). A PH domain is found at 166 to 267 (NTVVEGWMWK…WVEKLNETIR (102 aa)).

The sequence is that of PH domain-containing protein ECU06_0670 from Encephalitozoon cuniculi (strain GB-M1) (Microsporidian parasite).